A 119-amino-acid polypeptide reads, in one-letter code: BLOC-1-related complex subunit 8 (119 aa).

Ser-109 is modified (phosphoserine).

The protein belongs to the BORCS8 family. As to quaternary structure, component of the BLOC-one-related complex (BORC) which is composed of BLOC1S1, BLOC1S2, BORCS5, BORCS6, BORCS7, BORCS8, KXD1 and SNAPIN.

The protein resides in the lysosome membrane. In terms of biological role, as part of the BLOC-one-related complex (BORC), it plays a role in the movement and localization of lysosomes at the cell periphery. Associated with the cytosolic face of lysosomes, BORC recruits ARL8B to the lysosomal membrane and couples lysosomes to microtubule plus-end-directed kinesin motors, driving lysosome movement toward the cell periphery. The protein is BLOC-1-related complex subunit 8 of Homo sapiens (Human).